The chain runs to 581 residues: Lipoprotein LpqB (581 aa).

The N-terminal stretch at 1–23 (MRNHVSRYLTALIAVGCAATTAA) is a signal peptide. A lipid anchor (N-palmitoyl cysteine) is attached at Cys-24. Residue Cys-24 is the site of S-diacylglycerol cysteine attachment.

This sequence belongs to the LpqB lipoprotein family.

It is found in the cell membrane. This is Lipoprotein LpqB from Corynebacterium diphtheriae (strain ATCC 700971 / NCTC 13129 / Biotype gravis).